Reading from the N-terminus, the 493-residue chain is Beta-amyrin 11-oxidase (493 aa).

The chain crosses the membrane as a helical span at residues 7–23 (CMSAATLLVCYIFGSKF). Heme is bound at residue C439.

This sequence belongs to the cytochrome P450 family. The cofactor is heme. In terms of tissue distribution, expressed in roots and stolons. Not detected in leaves and stems.

Its subcellular location is the membrane. It carries out the reaction beta-amyrin + 2 reduced [NADPH--hemoprotein reductase] + 2 O2 = 11-oxo-beta-amyrin + 2 oxidized [NADPH--hemoprotein reductase] + 3 H2O + 2 H(+). It catalyses the reaction beta-amyrin + reduced [NADPH--hemoprotein reductase] + O2 = 11alpha-hydroxy-beta-amyrin + oxidized [NADPH--hemoprotein reductase] + H2O + H(+). The catalysed reaction is 11alpha-hydroxy-beta-amyrin + reduced [NADPH--hemoprotein reductase] + O2 = 11-oxo-beta-amyrin + oxidized [NADPH--hemoprotein reductase] + 2 H2O + H(+). Its function is as follows. Involved in the biosynthesis of Glycyrrhetinic acid (GA), a natural product which exhibits anti-inflammatory activity. Catalyzes 2 successive oxidations of beta-amyrin, producing a precursor of the triterpene sweetener glycyrrhizin. Unable to use 11-deoxoglycyrrhetinic acid or ent-kaurenoic acid as substrates. The sequence is that of Beta-amyrin 11-oxidase from Glycyrrhiza uralensis (Chinese licorice).